Here is a 486-residue protein sequence, read N- to C-terminus: Glutamyl-tRNA(Gln) amidotransferase subunit A (486 aa).

Residues Lys-74 and Ser-149 each act as charge relay system in the active site. Ser-173 acts as the Acyl-ester intermediate in catalysis.

The protein belongs to the amidase family. GatA subfamily. As to quaternary structure, heterotrimer of A, B and C subunits.

It carries out the reaction L-glutamyl-tRNA(Gln) + L-glutamine + ATP + H2O = L-glutaminyl-tRNA(Gln) + L-glutamate + ADP + phosphate + H(+). Functionally, allows the formation of correctly charged Gln-tRNA(Gln) through the transamidation of misacylated Glu-tRNA(Gln) in organisms which lack glutaminyl-tRNA synthetase. The reaction takes place in the presence of glutamine and ATP through an activated gamma-phospho-Glu-tRNA(Gln). The sequence is that of Glutamyl-tRNA(Gln) amidotransferase subunit A from Prochlorococcus marinus (strain SARG / CCMP1375 / SS120).